The chain runs to 94 residues: Large ribosomal subunit protein bL28 (94 aa).

The disordered stretch occupies residues 1–21 (MARRCEVTGRGTVSGNNVSHS). Positions 11 to 20 (GTVSGNNVSH) are enriched in polar residues.

The protein belongs to the bacterial ribosomal protein bL28 family.

The chain is Large ribosomal subunit protein bL28 from Leptospira interrogans serogroup Icterohaemorrhagiae serovar copenhageni (strain Fiocruz L1-130).